The chain runs to 330 residues: Polygalacturonase inhibitor 1 (330 aa).

A signal peptide spans 1 to 21 (MDKTATLCLLFLFTFLTTCLS). Disulfide bonds link Cys25/Cys55 and Cys56/Cys63. 10 LRR repeats span residues 69 to 93 (NHRV…VGDL), 94 to 117 (PYLE…TIAK), 118 to 142 (LKNL…ISQL), 143 to 166 (KNLE…LSTL), 167 to 189 (PKIL…SFGS), 191 to 215 (PGTV…LGNI), 217 to 237 (FNRI…LFGS), 238 to 260 (NKTT…KVDI), 261 to 285 (PKTL…WTEA), and 287 to 309 (LQFF…KLQT). 2 N-linked (GlcNAc...) asparagine glycosylation sites follow: Asn106 and Asn130. Residue Asn238 is glycosylated (N-linked (GlcNAc...) asparagine). An N-linked (GlcNAc...) asparagine glycan is attached at Asn291. 2 disulfides stabilise this stretch: Cys298/Cys320 and Cys322/Cys329.

The protein belongs to the polygalacturonase-inhibiting protein family.

The protein localises to the secreted. Its subcellular location is the cell wall. It localises to the membrane. In terms of biological role, inhibitor of fungal polygalacturonase. It is an important factor for plant resistance to phytopathogenic fungi. The sequence is that of Polygalacturonase inhibitor 1 (PGIP1) from Arabidopsis thaliana (Mouse-ear cress).